The chain runs to 334 residues: RNA ligase 2 (334 aa).

An adenylyltransferase region spans residues 1–234 (MFKKYSSLEN…KCKNSKFSEK (234 aa)). 6 residues coordinate AMP: Glu34, Lys35, Ile36, Asn40, Arg55, and Glu99. The N6-AMP-lysine intermediate role is filled by Lys35. Mg(2+) contacts are provided by Ile162, Leu164, Asn166, Glu204, and Tyr206. Lys225 and Lys227 together coordinate AMP.

This sequence belongs to the RNA ligase 2 family. Requires Mg(2+) as cofactor. Mn(2+) is required as a cofactor.

The enzyme catalyses ATP + (ribonucleotide)n-3'-hydroxyl + 5'-phospho-(ribonucleotide)m = (ribonucleotide)n+m + AMP + diphosphate.. Its function is as follows. Repairs 3'-OH/5'-PO4 nicks in duplex RNA or RNA:DNA hybrid in which the broken 3'-OH strand is RNA. The nick ligation reaction entails three nucleotidyl transfer steps. In the first step, the RNA ligase reacts with ATP in the absence of nucleic acid to form a covalent ligase-AMP intermediate and release pyrophosphate. In step 2, the ligase-AMP binds to the nicked duplex nucleic acid and transfers the adenylate to the 5'-PO4 terminus to form an adenylylated nicked intermediate. In step 3, the RNA ligase directs the attack of the nick 3'-OH on the 5'-phosphoanhydride linkage, resulting in a repaired 3' - 5' phosphodiester and release of AMP. This Enterobacteria phage T4 (Bacteriophage T4) protein is RNA ligase 2 (Y10A).